A 1009-amino-acid polypeptide reads, in one-letter code: Glutamate receptor ionotropic, delta-1 (1009 aa).

The first 20 residues, 1–20, serve as a signal peptide directing secretion; the sequence is MEALTLWLLPWICQCVSVRA. The interaction with CBLN1 stretch occupies residues 21 to 436; that stretch reads DSIIHIGAIF…ERPMGSRLQG (416 aa). Over 21 to 562 the chain is Extracellular; it reads DSIIHIGAIF…SIFSLFAPFD (542 aa). Cystine bridges form between C80–C351, C96–C128, and C294–C306. N-linked (GlcNAc...) asparagine glycans are attached at residues N131 and N200. N422 and N498 each carry an N-linked (GlcNAc...) asparagine glycan. Residues E527, V530, and D531 each coordinate Ca(2+). A helical membrane pass occupies residues 563–583; sequence FAVWACIAAAIPVVGVLIFVL. Over 584 to 637 the chain is Cytoplasmic; it reads NRIQAVRAQSAAQPRPSASATLHSAIWIVYGAFVQQGGESSVNSMAMRIVMGSW. The helical transmembrane segment at 638–658 threads the bilayer; sequence WLFTLIVCSSYTANLAAFLTV. At 659–830 the chain is on the extracellular side; the sequence is SRMDNPIRTF…ADGKSLKLHS (172 aa). Ca(2+) is bound by residues D753, D755, and S757. The helical transmembrane segment at 831-851 threads the bilayer; the sequence is FAGVFCILAIGLLLACLVAAL. Over 852–1009 the chain is Cytoplasmic; sequence ELWWNSNRCH…ALDTSHGTSI (158 aa). Polar residues predominate over residues 930-942; the sequence is FLPEQSSHGTSRT. The interval 930–954 is disordered; that stretch reads FLPEQSSHGTSRTLSSGPSSNLPLP. The span at 943–954 shows a compositional bias: low complexity; the sequence is LSSGPSSNLPLP.

It belongs to the glutamate-gated ion channel (TC 1.A.10.1) family. GRID1 subfamily. Homodimer. Interacts (via extracellular N-terminal domain) with CBLN1 (via C1q domain), and more weakly with CBLN2; the interactions mediate the trans-synaptic adhesion complexes also with neurexins and are required for ligand-gated cation channel activity.

The protein localises to the postsynaptic cell membrane. It catalyses the reaction Ca(2+)(in) = Ca(2+)(out). The catalysed reaction is Na(+)(in) = Na(+)(out). In terms of biological role, member of the ionotropic glutamate receptor family, which plays a crucial role in synaptic organization and signal transduction in the central nervous system. Although it shares structural features with ionotropic glutamate receptors, does not bind glutamate as a primary ligand. Instead, forms trans-synaptic adhesion complexes with presynaptic neurexins and cerebellins, regulating NMDA and AMPA receptor activity and influencing synaptic plasticity through signal transduction. In the presence of neurexins and cerebellins, forms cation-selective channels that are proposed to be gated by glycine and D-serine. However, recent research disputes this ligand-gated cation channel activity. Cation-selective ion channel can be triggered by GRM1 in dopaminergic neurons. Also acts as a receptor for GABA, modulating inhibitory synaptic plasticity through non-ionotropic mechanisms. This Homo sapiens (Human) protein is Glutamate receptor ionotropic, delta-1.